The following is a 229-amino-acid chain: Large ribosomal subunit protein uL1 (229 aa).

This sequence belongs to the universal ribosomal protein uL1 family. Part of the 50S ribosomal subunit.

Binds directly to 23S rRNA. The L1 stalk is quite mobile in the ribosome, and is involved in E site tRNA release. Its function is as follows. Protein L1 is also a translational repressor protein, it controls the translation of the L11 operon by binding to its mRNA. The sequence is that of Large ribosomal subunit protein uL1 from Caulobacter sp. (strain K31).